The sequence spans 379 residues: Succinyl-diaminopimelate desuccinylase (379 aa).

H70 is a Zn(2+) binding site. The active site involves D72. Residue D103 participates in Zn(2+) binding. The active-site Proton acceptor is the E137. Zn(2+) contacts are provided by E138, E166, and H352.

It belongs to the peptidase M20A family. DapE subfamily. As to quaternary structure, homodimer. Requires Zn(2+) as cofactor. The cofactor is Co(2+).

It catalyses the reaction N-succinyl-(2S,6S)-2,6-diaminopimelate + H2O = (2S,6S)-2,6-diaminopimelate + succinate. The protein operates within amino-acid biosynthesis; L-lysine biosynthesis via DAP pathway; LL-2,6-diaminopimelate from (S)-tetrahydrodipicolinate (succinylase route): step 3/3. Its function is as follows. Catalyzes the hydrolysis of N-succinyl-L,L-diaminopimelic acid (SDAP), forming succinate and LL-2,6-diaminopimelate (DAP), an intermediate involved in the bacterial biosynthesis of lysine and meso-diaminopimelic acid, an essential component of bacterial cell walls. The chain is Succinyl-diaminopimelate desuccinylase from Shewanella putrefaciens (strain CN-32 / ATCC BAA-453).